The sequence spans 136 residues: Small ribosomal subunit protein uS11c (136 aa).

Positions 1-22 (MAKAIPKKGSRGRIGSRKSTRK) are disordered.

The protein belongs to the universal ribosomal protein uS11 family. Part of the 30S ribosomal subunit.

The protein localises to the plastid. Its subcellular location is the chloroplast. The sequence is that of Small ribosomal subunit protein uS11c from Lactuca sativa (Garden lettuce).